The chain runs to 270 residues: Formamidopyrimidine-DNA glycosylase (270 aa).

Catalysis depends on P2, which acts as the Schiff-base intermediate with DNA. Catalysis depends on E3, which acts as the Proton donor. Catalysis depends on K58, which acts as the Proton donor; for beta-elimination activity. The DNA site is built by H91, R110, and R151. The FPG-type zinc-finger motif lies at 236 to 270; that stretch reads RVYDREDAPCRRCATPIRRIVQAQRASFYCPTCQR. The active-site Proton donor; for delta-elimination activity is R260.

The protein belongs to the FPG family. As to quaternary structure, monomer. Requires Zn(2+) as cofactor.

It carries out the reaction Hydrolysis of DNA containing ring-opened 7-methylguanine residues, releasing 2,6-diamino-4-hydroxy-5-(N-methyl)formamidopyrimidine.. The catalysed reaction is 2'-deoxyribonucleotide-(2'-deoxyribose 5'-phosphate)-2'-deoxyribonucleotide-DNA = a 3'-end 2'-deoxyribonucleotide-(2,3-dehydro-2,3-deoxyribose 5'-phosphate)-DNA + a 5'-end 5'-phospho-2'-deoxyribonucleoside-DNA + H(+). Involved in base excision repair of DNA damaged by oxidation or by mutagenic agents. Acts as a DNA glycosylase that recognizes and removes damaged bases. Has a preference for oxidized purines, such as 7,8-dihydro-8-oxoguanine (8-oxoG). Has AP (apurinic/apyrimidinic) lyase activity and introduces nicks in the DNA strand. Cleaves the DNA backbone by beta-delta elimination to generate a single-strand break at the site of the removed base with both 3'- and 5'-phosphates. In Thiobacillus denitrificans (strain ATCC 25259 / T1), this protein is Formamidopyrimidine-DNA glycosylase.